A 335-amino-acid polypeptide reads, in one-letter code: MAQRISLTRYLVEQQRVDGLIPSQLRLLLEVVARACKHISHAVNKGALGGVLGSASSENVQGEIQKKLDIIANEVLIEANEWGGHLAAMASEEMDSIYVVPNRYPQGEYLLLFDPLDGSSNIDVNVSIGTIFSVLKKPEGHPGVTTEDFLQAGSSQVAAGYCIYGPQTTLVLTVGDGVAMFTLDREQGSFVLVEENVKIPADTREFAINMSNMRHWDAPVKRYIDECLAGTEGPREKDFNMRWIASMVADVHRILTRGGIFLYPWDKREPNKPGKLRLMYEANPMSWLIEQAGGAATNGKERILDIQPKQLHERVSVILGSKNEVERVTRYHSGI.

Mg(2+)-binding residues include E92, D114, L116, and D117. Residues 117 to 120, N209, and K275 contribute to the substrate site; that span reads DGSS. E281 contacts Mg(2+).

It belongs to the FBPase class 1 family. As to quaternary structure, homotetramer. The cofactor is Mg(2+).

It is found in the cytoplasm. The catalysed reaction is beta-D-fructose 1,6-bisphosphate + H2O = beta-D-fructose 6-phosphate + phosphate. It functions in the pathway carbohydrate biosynthesis; gluconeogenesis. The protein is Fructose-1,6-bisphosphatase class 1 of Paracidovorax citrulli (strain AAC00-1) (Acidovorax citrulli).